A 438-amino-acid polypeptide reads, in one-letter code: Phosphoribosylamine--glycine ligase (438 aa).

The ATP-grasp domain maps to 108–316 (REFMERNNIP…LLEIAKGIVE (209 aa)). 135 to 194 (IDEYGKPVVVKPLGLTGGKGVKVVGYQLKDNEEAKEYAEHIIRKDGKVLIEERTDGVEFT) is an ATP binding site. Residues glutamine 274, glutamate 286, and asparagine 288 each coordinate Mg(2+). Positions 274, 286, and 288 each coordinate Mn(2+).

The protein belongs to the GARS family. Mg(2+) is required as a cofactor. It depends on Mn(2+) as a cofactor.

The catalysed reaction is 5-phospho-beta-D-ribosylamine + glycine + ATP = N(1)-(5-phospho-beta-D-ribosyl)glycinamide + ADP + phosphate + H(+). The protein operates within purine metabolism; IMP biosynthesis via de novo pathway; N(1)-(5-phospho-D-ribosyl)glycinamide from 5-phospho-alpha-D-ribose 1-diphosphate: step 2/2. This chain is Phosphoribosylamine--glycine ligase, found in Pyrococcus horikoshii (strain ATCC 700860 / DSM 12428 / JCM 9974 / NBRC 100139 / OT-3).